The chain runs to 266 residues: Protein-ADP-ribose hydrolase (266 aa).

The 192-residue stretch at 74–265 folds into the Macro domain; that stretch reads TDLKDLKPIK…LYKEAFNRDA (192 aa). 3 residues coordinate ADP-D-ribose: aspartate 93, isoleucine 94, and asparagine 107. Residues cysteine 113, histidine 118, and cysteine 120 each coordinate Zn(2+). Residues cysteine 120, isoleucine 121, aspartate 122, serine 212, threonine 213, glycine 214, and phenylalanine 216 each contribute to the ADP-D-ribose site.

The protein belongs to the MacroD-type family. Zn-Macro subfamily. Requires Zn(2+) as cofactor.

The enzyme catalyses 4-O-(ADP-D-ribosyl)-L-aspartyl-[protein] + H2O = L-aspartyl-[protein] + ADP-D-ribose + H(+). Its function is as follows. ADP-ribosylhydrolase that specifically reverses the SirTM-mediated mono-ADP-ribosylation at an asparatate residue of GcvH-L, by releasing ADP-ribose from the target protein. May play a role in the regulation of the response to host-induced oxidative stress. This is Protein-ADP-ribose hydrolase from Staphylococcus aureus (strain MSSA476).